Consider the following 202-residue polypeptide: Kunitz trypsin inhibitor 7 (202 aa).

An N-terminal signal peptide occupies residues 1–25 (MKTFRSMLISLLLVAITTTSGVVEG). A disulfide bond links Cys-69 and Cys-115. Residues Asn-93, Asn-136, Asn-144, and Asn-198 are each glycosylated (N-linked (GlcNAc...) asparagine).

It belongs to the protease inhibitor I3 (leguminous Kunitz-type inhibitor) family.

Exhibits Kunitz trypsin protease inhibitor activity. The chain is Kunitz trypsin inhibitor 7 from Arabidopsis thaliana (Mouse-ear cress).